The sequence spans 262 residues: Ribosomal RNA small subunit methyltransferase A (262 aa).

6 residues coordinate S-adenosyl-L-methionine: H16, L18, G43, E64, D89, and N109.

The protein belongs to the class I-like SAM-binding methyltransferase superfamily. rRNA adenine N(6)-methyltransferase family. RsmA subfamily.

It is found in the cytoplasm. It carries out the reaction adenosine(1518)/adenosine(1519) in 16S rRNA + 4 S-adenosyl-L-methionine = N(6)-dimethyladenosine(1518)/N(6)-dimethyladenosine(1519) in 16S rRNA + 4 S-adenosyl-L-homocysteine + 4 H(+). In terms of biological role, specifically dimethylates two adjacent adenosines (A1518 and A1519) in the loop of a conserved hairpin near the 3'-end of 16S rRNA in the 30S particle. May play a critical role in biogenesis of 30S subunits. The polypeptide is Ribosomal RNA small subunit methyltransferase A (Xanthomonas euvesicatoria pv. vesicatoria (strain 85-10) (Xanthomonas campestris pv. vesicatoria)).